Here is a 100-residue protein sequence, read N- to C-terminus: UPF0213 protein YhbQ (100 aa).

The region spanning 2 to 77 is the GIY-YIG domain; the sequence is TPWFLYLIRT…KQLTKRQKER (76 aa).

It belongs to the UPF0213 family.

This Shigella dysenteriae serotype 1 (strain Sd197) protein is UPF0213 protein YhbQ.